Here is a 169-residue protein sequence, read N- to C-terminus: Crossover junction endodeoxyribonuclease RuvC (169 aa).

Catalysis depends on residues Asp7, Glu67, and Asp140. The Mg(2+) site is built by Asp7, Glu67, and Asp140.

The protein belongs to the RuvC family. Homodimer which binds Holliday junction (HJ) DNA. The HJ becomes 2-fold symmetrical on binding to RuvC with unstacked arms; it has a different conformation from HJ DNA in complex with RuvA. In the full resolvosome a probable DNA-RuvA(4)-RuvB(12)-RuvC(2) complex forms which resolves the HJ. Mg(2+) is required as a cofactor.

Its subcellular location is the cytoplasm. The enzyme catalyses Endonucleolytic cleavage at a junction such as a reciprocal single-stranded crossover between two homologous DNA duplexes (Holliday junction).. In terms of biological role, the RuvA-RuvB-RuvC complex processes Holliday junction (HJ) DNA during genetic recombination and DNA repair. Endonuclease that resolves HJ intermediates. Cleaves cruciform DNA by making single-stranded nicks across the HJ at symmetrical positions within the homologous arms, yielding a 5'-phosphate and a 3'-hydroxyl group; requires a central core of homology in the junction. The consensus cleavage sequence is 5'-(A/T)TT(C/G)-3'. Cleavage occurs on the 3'-side of the TT dinucleotide at the point of strand exchange. HJ branch migration catalyzed by RuvA-RuvB allows RuvC to scan DNA until it finds its consensus sequence, where it cleaves and resolves the cruciform DNA. This Clostridioides difficile (strain 630) (Peptoclostridium difficile) protein is Crossover junction endodeoxyribonuclease RuvC.